The following is a 1008-amino-acid chain: Histone deacetylase complex subunit SAP130-A (1008 aa).

Residues 1-31 (MNSQQFPRQAASMPSPQVSNSGASVGQNVQG) are compositionally biased toward polar residues. 4 disordered regions span residues 1 to 44 (MNSQ…DVQS), 113 to 134 (SKST…SAVP), 415 to 435 (IQSD…HRAS), and 617 to 720 (TPGG…PATI). The segment covering 35 to 44 (EVARDMDVQS) has biased composition (basic and acidic residues). The segment covering 618–644 (PGGTTVMQSHSQSPGIGSSPAQGSSPR) has biased composition (polar residues). Positions 678–697 (ADQPSAAASLPSSHHPAAAV) are enriched in low complexity.

Belongs to the SAP130 family.

The protein localises to the nucleus. Acts as a transcriptional repressor. The chain is Histone deacetylase complex subunit SAP130-A (sap130-a) from Xenopus laevis (African clawed frog).